The chain runs to 628 residues: Chaperone protein DnaK (628 aa).

Residue Thr174 is modified to Phosphothreonine; by autocatalysis. Residues 589–628 (AAGGAGPDMGAGAGPDMGAGASNGSAPYGDDVVDGDYKEV) are disordered. The segment covering 591–605 (GGAGPDMGAGAGPDM) has biased composition (gly residues).

It belongs to the heat shock protein 70 family.

Its function is as follows. Acts as a chaperone. This is Chaperone protein DnaK from Lachnospira eligens (strain ATCC 27750 / DSM 3376 / VPI C15-48 / C15-B4) (Eubacterium eligens).